Consider the following 514-residue polypeptide: Probable cytochrome P450 6w1 (514 aa).

Cys450 is a heme binding site.

Belongs to the cytochrome P450 family. Requires heme as cofactor.

It localises to the endoplasmic reticulum membrane. It is found in the microsome membrane. Its function is as follows. May be involved in the metabolism of insect hormones and in the breakdown of synthetic insecticides. In Drosophila melanogaster (Fruit fly), this protein is Probable cytochrome P450 6w1 (Cyp6w1).